The primary structure comprises 201 residues: Orotate phosphoribosyltransferase (201 aa).

113-121 (EDIITTGKS) serves as a coordination point for 5-phospho-alpha-D-ribose 1-diphosphate. Orotate is bound by residues Thr-117 and Arg-145.

Belongs to the purine/pyrimidine phosphoribosyltransferase family. PyrE subfamily. As to quaternary structure, homodimer. Mg(2+) serves as cofactor.

The enzyme catalyses orotidine 5'-phosphate + diphosphate = orotate + 5-phospho-alpha-D-ribose 1-diphosphate. It functions in the pathway pyrimidine metabolism; UMP biosynthesis via de novo pathway; UMP from orotate: step 1/2. Functionally, catalyzes the transfer of a ribosyl phosphate group from 5-phosphoribose 1-diphosphate to orotate, leading to the formation of orotidine monophosphate (OMP). This Helicobacter pylori (strain Shi470) protein is Orotate phosphoribosyltransferase.